The sequence spans 454 residues: Natural cytotoxicity triggering receptor 3 ligand 1 (454 aa).

An N-terminal signal peptide occupies residues 1–24 (MTWRAAASTCAALLILLWALTTEG). The Extracellular segment spans residues 25–262 (DLKVEMMAGG…SETEKTDNFS (238 aa)). An Ig-like V-type domain is found at 27 to 138 (KVEMMAGGTQ…LKAQGTVQLE (112 aa)). Residues Asn-43 and Asn-57 are each glycosylated (N-linked (GlcNAc...) asparagine). Cys-48 and Cys-122 are oxidised to a cystine. 2 interaction with NCR3 regions span residues 59–62 (TSMG) and 127–130 (TPLK). Positions 143-244 (PASRLLLDQV…LHTPLRSNFT (102 aa)) constitute an Ig-like C1-type domain. An intrachain disulfide couples Cys-163 to Cys-228. N-linked (GlcNAc...) asparagine glycans are attached at residues Asn-174, Asn-208, Asn-216, Asn-242, and Asn-260. A helical transmembrane segment spans residues 263–283 (IHWWPISFIGVGLVLLIVLIP). Residues 284–454 (WKKICNKSSS…QPPTLLLPLQ (171 aa)) lie on the Cytoplasmic side of the membrane. Positions 291–429 (SSSAYTPLKC…APILPVSPIW (139 aa)) are retroviral-Gag-like. The interval 395-454 (GKSIDDNSTKSEKQTPREHSDAVPDAPILPVSPIWEPPPATTSTTPVLSSQPPTLLLPLQ) is disordered. Residues 397 to 416 (SIDDNSTKSEKQTPREHSDA) are compositionally biased toward basic and acidic residues. The segment covering 435-454 (TTSTTPVLSSQPPTLLLPLQ) has biased composition (low complexity).

Monomer. Interacts specifically with NCR3, but not with other natural killer cell-activating receptors, including NCR1, NCR2 and KLRK1. In terms of tissue distribution, not detected in any normal tissue tested. Expressed at the surface of several tumor cell lines including T and B-lymphomas, myeloid leukemias, melanomas, carcinomas and large T SV40 antigen-transformed cells (at protein level).

Its subcellular location is the cell membrane. Its function is as follows. Triggers NCR3-dependent natural killer cell activation. This is Natural cytotoxicity triggering receptor 3 ligand 1 (NCR3LG1) from Homo sapiens (Human).